Reading from the N-terminus, the 225-residue chain is GTP-binding nuclear protein Ran (225 aa).

A Small GTPase Ran-type domain is found at 8-172 (VVAEFKLVLV…LWILRKLTGD (165 aa)). 19 to 26 (DGGVGKTT) serves as a coordination point for GTP. Residues 38–46 (KRYIATQGV) are switch-I. Residues Gly69, 123 to 126 (NKVD), and 151 to 153 (SAK) contribute to the GTP site. The interval 69 to 85 (GQEKLGGLREGYYIGAN) is switch-II.

This sequence belongs to the small GTPase superfamily. Ran family. Monomer. Found in a nuclear export complex with RanGTP, exportin and pre-miRNA.

The protein localises to the nucleus. Functionally, GTP-binding protein involved in nucleocytoplasmic transport. Required for the import of protein into the nucleus and also for RNA export. Involved in chromatin condensation and control of cell cycle. This chain is GTP-binding nuclear protein Ran, found in Tetrahymena thermophila.